Consider the following 811-residue polypeptide: Vacuolar protein sorting-associated protein 70 (811 aa).

Residues 1-21 (MRMIQRERKREKEEGQLKERT) are compositionally biased toward basic and acidic residues. Positions 1-63 (MRMIQRERKR…MNDSFTLTSR (63 aa)) are disordered. N-linked (GlcNAc...) asparagine glycosylation is present at asparagine 55. Residues 90 to 110 (FMYLILASLLLYMGFVAAFAP) traverse the membrane as a helical segment. Asparagine 237 is a glycosylation site (N-linked (GlcNAc...) asparagine). Residues 334-367 (FSDTPGDPTTPGYPSKDSDTEHMSPVGRVPRIPS) form a disordered region. The span at 336–345 (DTPGDPTTPG) shows a compositional bias: low complexity. Residues histidine 445, aspartate 456, and aspartate 522 each contribute to the Zn(2+) site. Residues asparagine 568 and asparagine 599 are each glycosylated (N-linked (GlcNAc...) asparagine). Residue histidine 607 participates in Zn(2+) binding. Asparagine 670 carries an N-linked (GlcNAc...) asparagine glycan.

It belongs to the peptidase M28 family. M28B subfamily. The cofactor is Zn(2+).

It is found in the membrane. Its function is as follows. Involved in vacuolar protein sorting. The sequence is that of Vacuolar protein sorting-associated protein 70 (VPS70) from Saccharomyces cerevisiae (strain ATCC 204508 / S288c) (Baker's yeast).